The following is a 130-amino-acid chain: Large ribosomal subunit protein bL17 (130 aa).

Belongs to the bacterial ribosomal protein bL17 family. In terms of assembly, part of the 50S ribosomal subunit. Contacts protein L32.

The sequence is that of Large ribosomal subunit protein bL17 from Buchnera aphidicola subsp. Acyrthosiphon pisum (strain 5A).